The chain runs to 180 residues: Superoxide dismutase [Cu-Zn] (180 aa).

The signal sequence occupies residues 1–19; sequence MFMNLLTQVSNAIFPQVEA. Cu cation is bound by residues H68, H70, and H85. C79 and C171 are oxidised to a cystine. The Zn(2+) site is built by H85, H93, H102, and D105. Residue H142 participates in Cu cation binding.

This sequence belongs to the Cu-Zn superoxide dismutase family. Homodimer. It depends on Cu cation as a cofactor. Zn(2+) serves as cofactor.

It is found in the cytoplasm. It catalyses the reaction 2 superoxide + 2 H(+) = H2O2 + O2. The insertion of copper which activates the protein requires glutathione. This is independent of copper chaperone for SOD1 (CCS), which activates orthologs. In terms of biological role, protects cells against oxidative stress by converting superoxide radicals to hydrogen peroxide. Required for normal brood size. May be involved in regulating mpk-1 phosphorylation downstream of phosphatase ptp-2 during oocyte maturation. This is Superoxide dismutase [Cu-Zn] (sod-1) from Caenorhabditis elegans.